A 504-amino-acid polypeptide reads, in one-letter code: Maturase K (504 aa).

The protein belongs to the intron maturase 2 family. MatK subfamily.

It is found in the plastid. The protein resides in the chloroplast. Usually encoded in the trnK tRNA gene intron. Probably assists in splicing its own and other chloroplast group II introns. The protein is Maturase K of Arabidopsis thaliana (Mouse-ear cress).